Reading from the N-terminus, the 431-residue chain is Glutamate-1-semialdehyde 2,1-aminomutase (431 aa).

K269 bears the N6-(pyridoxal phosphate)lysine mark.

This sequence belongs to the class-III pyridoxal-phosphate-dependent aminotransferase family. HemL subfamily. As to quaternary structure, homodimer. Requires pyridoxal 5'-phosphate as cofactor.

The protein resides in the cytoplasm. The enzyme catalyses (S)-4-amino-5-oxopentanoate = 5-aminolevulinate. Its pathway is porphyrin-containing compound metabolism; protoporphyrin-IX biosynthesis; 5-aminolevulinate from L-glutamyl-tRNA(Glu): step 2/2. It functions in the pathway porphyrin-containing compound metabolism; chlorophyll biosynthesis. This is Glutamate-1-semialdehyde 2,1-aminomutase from Chlorobaculum parvum (strain DSM 263 / NCIMB 8327) (Chlorobium vibrioforme subsp. thiosulfatophilum).